Consider the following 775-residue polypeptide: Aconitate hydratase, mitochondrial (775 aa).

Residues methionine 1 to aspartate 25 constitute a mitochondrion transit peptide. Residues glutamine 95 and aspartate 188–histidine 190 each bind substrate. An N-linked (GlcNAc...) asparagine glycan is attached at asparagine 337. Cysteine 381 provides a ligand contact to [4Fe-4S] cluster. The N-linked (GlcNAc...) asparagine glycan is linked to asparagine 383. [4Fe-4S] cluster-binding residues include cysteine 444 and cysteine 447. Residue arginine 470 participates in substrate binding. Residue asparagine 471 is glycosylated (N-linked (GlcNAc...) asparagine). Substrate-binding residues include arginine 475 and arginine 603. An N-linked (GlcNAc...) asparagine glycan is attached at asparagine 608. A substrate-binding site is contributed by serine 666–arginine 667. 2 N-linked (GlcNAc...) asparagine glycosylation sites follow: asparagine 754 and asparagine 763.

The protein belongs to the aconitase/IPM isomerase family. As to quaternary structure, monomer. It depends on [4Fe-4S] cluster as a cofactor.

It is found in the mitochondrion. It carries out the reaction citrate = D-threo-isocitrate. Its pathway is carbohydrate metabolism; tricarboxylic acid cycle; isocitrate from oxaloacetate: step 2/2. In terms of biological role, catalyzes the isomerization of citrate to isocitrate via cis-aconitate. The polypeptide is Aconitate hydratase, mitochondrial (Arthroderma benhamiae (strain ATCC MYA-4681 / CBS 112371) (Trichophyton mentagrophytes)).